The following is a 196-amino-acid chain: Large ribosomal subunit protein bL25 (196 aa).

The protein belongs to the bacterial ribosomal protein bL25 family. CTC subfamily. Part of the 50S ribosomal subunit; part of the 5S rRNA/L5/L18/L25 subcomplex. Contacts the 5S rRNA. Binds to the 5S rRNA independently of L5 and L18.

This is one of the proteins that binds to the 5S RNA in the ribosome where it forms part of the central protuberance. This Bacteroides thetaiotaomicron (strain ATCC 29148 / DSM 2079 / JCM 5827 / CCUG 10774 / NCTC 10582 / VPI-5482 / E50) protein is Large ribosomal subunit protein bL25.